Reading from the N-terminus, the 472-residue chain is ATP synthase subunit beta (472 aa).

157–164 (GGAGVGKT) is an ATP binding site.

The protein belongs to the ATPase alpha/beta chains family. F-type ATPases have 2 components, CF(1) - the catalytic core - and CF(0) - the membrane proton channel. CF(1) has five subunits: alpha(3), beta(3), gamma(1), delta(1), epsilon(1). CF(0) has three main subunits: a(1), b(2) and c(9-12). The alpha and beta chains form an alternating ring which encloses part of the gamma chain. CF(1) is attached to CF(0) by a central stalk formed by the gamma and epsilon chains, while a peripheral stalk is formed by the delta and b chains.

Its subcellular location is the cell membrane. It catalyses the reaction ATP + H2O + 4 H(+)(in) = ADP + phosphate + 5 H(+)(out). In terms of biological role, produces ATP from ADP in the presence of a proton gradient across the membrane. The catalytic sites are hosted primarily by the beta subunits. This chain is ATP synthase subunit beta, found in Desulforudis audaxviator (strain MP104C).